The sequence spans 255 residues: Putative keratin-87 protein (255 aa).

The IF rod domain maps to Met1–Leu255. 2 coiled-coil regions span residues Leu19–Val81 and Leu147–Ser227.

It belongs to the intermediate filament family. Heterotetramer of two type I and two type II keratins.

The protein is Putative keratin-87 protein (KRT87P) of Homo sapiens (Human).